The sequence spans 109 residues: Arminin 6560 (109 aa).

A signal peptide spans 1 to 21; sequence MKCLFGFLFIMLVAFLQDVHG. The propeptide occupies 22-77; that stretch reads VDSCIGKPCKVKGEDMKDIKEKKIEDIKEEIKNVKKEIFEDVDDELLDDNIRDDKI. Isoleucine amide is present on I106.

This sequence belongs to the arminin family. As to expression, expressed in the ectodermal epithelium.

It localises to the secreted. The protein localises to the target cell membrane. Its function is as follows. Antimicrobial peptide with a broad-spectrum antimicrobial activity. Keeps its antibacterial activity under a wide range of salt concentrations that mimic physiological conditions of human blood, which is surprising, since Hydra is an obligate freshwater animal with nearly no salt tolerance. Does not affect red blood cells. This chain is Arminin 6560, found in Hydra vulgaris (Hydra).